The primary structure comprises 612 residues: 1,8-cineole synthase, chloroplastic (612 aa).

The transit peptide at 1–52 (MALVCGAPLASRSCLNKSLISSTHELKPLRRTILPTLRWKSATPSINMCLTT) directs the protein to the chloroplast. Mg(2+) is bound by residues D363, D367, and D515. The DDXXD motif signature appears at 363–367 (DDIYD).

This sequence belongs to the terpene synthase family. Tpsd subfamily. Mg(2+) serves as cofactor. Mn(2+) is required as a cofactor.

It localises to the plastid. It is found in the chloroplast. It catalyses the reaction (2E)-geranyl diphosphate + H2O = 1,8-cineole + diphosphate. Its pathway is terpene metabolism; oleoresin biosynthesis. Its function is as follows. Terpene synthase (TPS) involved in the biosynthesis of monoterpene natural products included in conifer oleoresin secretions and volatile emissions; these compounds contribute to biotic and abiotic stress defense against herbivores and pathogens. Catalyzes the conversion of (2E)-geranyl diphosphate (GPP) to 1,8-cineole. In Picea glauca (White spruce), this protein is 1,8-cineole synthase, chloroplastic.